A 227-amino-acid polypeptide reads, in one-letter code: GTPase ERas (227 aa).

Residues 1-19 show a composition bias toward polar residues; sequence MALPTKSSILDLSSGTPCT. The disordered stretch occupies residues 1-25; that stretch reads MALPTKSSILDLSSGTPCTRSPEES. 48 to 55 lines the GTP pocket; that stretch reads GASGVGKS. An Effector region motif is present at residues 70–78; it reads HDPTIQDSY. Residues 95 to 99 and 151 to 154 each bind GTP; these read DTSGQ and NKCD. S-palmitoyl cysteine attachment occurs at residues C220 and C222. C224 is modified (cysteine methyl ester). The S-farnesyl cysteine moiety is linked to residue C224. Positions 225-227 are cleaved as a propeptide — removed in mature form; sequence SVA.

It belongs to the small GTPase superfamily. Ras family. In terms of assembly, interacts with PIK3CD. As to expression, expressed in several undifferentiated mouse embryonic stem cell lines.

Its subcellular location is the cell membrane. The enzyme catalyses GTP + H2O = GDP + phosphate + H(+). Its activity is regulated as follows. Alternates between an inactive form bound to GDP and an active form bound to GTP. Activated by a guanine nucleotide-exchange factor (GEF) and inactivated by a GTPase-activating protein (GAP). Its function is as follows. Ras proteins bind GDP/GTP and possess intrinsic GTPase activity. Plays an important role in the tumor-like growth properties of embryonic stem cells. The chain is GTPase ERas (Eras) from Mus musculus (Mouse).